The following is a 196-amino-acid chain: ATP-dependent Clp protease proteolytic subunit (196 aa).

The active-site Nucleophile is Ser101. Residue His126 is part of the active site.

Belongs to the peptidase S14 family. As to quaternary structure, component of the chloroplastic Clp protease core complex.

Its subcellular location is the plastid. It localises to the chloroplast stroma. The enzyme catalyses Hydrolysis of proteins to small peptides in the presence of ATP and magnesium. alpha-casein is the usual test substrate. In the absence of ATP, only oligopeptides shorter than five residues are hydrolyzed (such as succinyl-Leu-Tyr-|-NHMec, and Leu-Tyr-Leu-|-Tyr-Trp, in which cleavage of the -Tyr-|-Leu- and -Tyr-|-Trp bonds also occurs).. In terms of biological role, cleaves peptides in various proteins in a process that requires ATP hydrolysis. Has a chymotrypsin-like activity. Plays a major role in the degradation of misfolded proteins. This Eucalyptus globulus subsp. globulus (Tasmanian blue gum) protein is ATP-dependent Clp protease proteolytic subunit.